We begin with the raw amino-acid sequence, 20 residues long: Cruzioseptin-15 (20 aa).

In terms of tissue distribution, expressed by the skin glands.

The protein resides in the secreted. Its function is as follows. Has antimicrobial activity. In Cruziohyla calcarifer (Splendid leaf frog), this protein is Cruzioseptin-15.